The following is a 390-amino-acid chain: uncharacterized protein (390 aa).

The protein belongs to the peptidase M24 family.

This is an uncharacterized protein from Sinorhizobium fredii (strain NBRC 101917 / NGR234).